Here is a 586-residue protein sequence, read N- to C-terminus: Asparagine synthetase [glutamine-hydrolyzing] 1 (586 aa).

The active-site For GATase activity is the Cys-2. The Glutamine amidotransferase type-2 domain maps to 2-185 (CGILAVLGCS…PGHLYSSRER (184 aa)). Residues 50 to 54 (RLAIV), 75 to 77 (NGE), and Asp-98 contribute to the L-glutamine site. The region spanning 193 to 516 (PTWFSESIPS…PQNSARLTVP (324 aa)) is the Asparagine synthetase domain. Residues Leu-231, Val-267, and 341–342 (SG) each bind ATP.

The catalysed reaction is L-aspartate + L-glutamine + ATP + H2O = L-asparagine + L-glutamate + AMP + diphosphate + H(+). Its pathway is amino-acid biosynthesis; L-asparagine biosynthesis; L-asparagine from L-aspartate (L-Gln route): step 1/1. The sequence is that of Asparagine synthetase [glutamine-hydrolyzing] 1 (AS1) from Lotus japonicus (Lotus corniculatus var. japonicus).